Here is a 619-residue protein sequence, read N- to C-terminus: Chaperone protein HscA homolog (619 aa).

It belongs to the heat shock protein 70 family.

Chaperone involved in the maturation of iron-sulfur cluster-containing proteins. Has a low intrinsic ATPase activity which is markedly stimulated by HscB. The sequence is that of Chaperone protein HscA homolog from Haemophilus influenzae (strain 86-028NP).